A 635-amino-acid chain; its full sequence is 1-deoxy-D-xylulose-5-phosphate synthase (635 aa).

Residues H79 and 120–122 contribute to the thiamine diphosphate site; that span reads GHS. Residue D151 coordinates Mg(2+). Thiamine diphosphate-binding positions include 152–153, N182, Y291, and E372; that span reads GA. N182 serves as a coordination point for Mg(2+).

The protein belongs to the transketolase family. DXPS subfamily. In terms of assembly, homodimer. Requires Mg(2+) as cofactor. The cofactor is thiamine diphosphate.

It catalyses the reaction D-glyceraldehyde 3-phosphate + pyruvate + H(+) = 1-deoxy-D-xylulose 5-phosphate + CO2. It participates in metabolic intermediate biosynthesis; 1-deoxy-D-xylulose 5-phosphate biosynthesis; 1-deoxy-D-xylulose 5-phosphate from D-glyceraldehyde 3-phosphate and pyruvate: step 1/1. In terms of biological role, catalyzes the acyloin condensation reaction between C atoms 2 and 3 of pyruvate and glyceraldehyde 3-phosphate to yield 1-deoxy-D-xylulose-5-phosphate (DXP). The protein is 1-deoxy-D-xylulose-5-phosphate synthase of Xylella fastidiosa (strain M23).